A 142-amino-acid chain; its full sequence is Transcriptional regulator MraZ (142 aa).

2 consecutive SpoVT-AbrB domains span residues 5-51 (ASSL…PRTE) and 77-120 (AMDV…DKAT).

This sequence belongs to the MraZ family. As to quaternary structure, forms oligomers.

Its subcellular location is the cytoplasm. It localises to the nucleoid. This Delftia acidovorans (strain DSM 14801 / SPH-1) protein is Transcriptional regulator MraZ.